Consider the following 52-residue polypeptide: Proteinase inhibitor PSI-1.2 (52 aa).

4 disulfide bridges follow: Cys3–Cys32, Cys7–Cys28, Cys16–Cys38, and Cys31–Cys49.

In terms of biological role, potent inhibitor of trypsin and a weaker inhibitor of chymotrypsin. It does not inhibit elastase and subtilisin DY. This chain is Proteinase inhibitor PSI-1.2, found in Capsicum annuum (Capsicum pepper).